The chain runs to 64 residues: Large ribosomal subunit protein bL35 (64 aa).

This sequence belongs to the bacterial ribosomal protein bL35 family.

This is Large ribosomal subunit protein bL35 from Leifsonia xyli subsp. xyli (strain CTCB07).